Consider the following 312-residue polypeptide: Porphobilinogen deaminase (312 aa).

The residue at position 241 (Cys-241) is an S-(dipyrrolylmethanemethyl)cysteine.

The protein belongs to the HMBS family. As to quaternary structure, monomer. It depends on dipyrromethane as a cofactor.

It carries out the reaction 4 porphobilinogen + H2O = hydroxymethylbilane + 4 NH4(+). It functions in the pathway porphyrin-containing compound metabolism; protoporphyrin-IX biosynthesis; coproporphyrinogen-III from 5-aminolevulinate: step 2/4. Its pathway is porphyrin-containing compound metabolism; chlorophyll biosynthesis. Functionally, tetrapolymerization of the monopyrrole PBG into the hydroxymethylbilane pre-uroporphyrinogen in several discrete steps. In Prosthecochloris aestuarii (strain DSM 271 / SK 413), this protein is Porphobilinogen deaminase.